Here is a 431-residue protein sequence, read N- to C-terminus: DNA polymerase delta subunit 3 (431 aa).

The segment at 64–80 is necessary for function, possibly resulting from its inability to interact with PolD2; the sequence is QGSDSGEDLYSVVLESR. Positions 128 to 431 are disordered; sequence PGAGKIVPSA…AGIMNFFSKK (304 aa). Residues 156-171 show a composition bias toward low complexity; the sequence is SKSAVKLEPSKSSLKS. Basic and acidic residues-rich tracts occupy residues 172 to 200 and 252 to 271; these read EPAK…EQAS and SPPE…NKKE. Over residues 278–290 the composition is skewed to low complexity; sequence PSPTKKPTTANTS. A compositionally biased stretch (acidic residues) spans 294-307; the sequence is FDEESAESSDEEEK. Basic and acidic residues-rich tracts occupy residues 308–328 and 343–362; these read LDML…EKAS and QPPK…KMDT. The span at 387 to 411 shows a compositional bias: low complexity; sequence PANKKVSPKAAAPVNKKKSPPSAAK.

Component of both the DNA polymerase delta and DNA polymerase zeta complexes. The DNA polymerase delta complex consists of three subunits: the catalytic subunit PolD1 and two accessory subunits PolD2/Pol31 and PolD3/Pol32. Within the delta complex, interacts with both PolD1 and PolD2. Component of the DNA polymerase zeta complex consisting of four subunits: the catalytic subunit PolZ1 and three accessory subunits PolZ2/Rev7, PolD2/Pol31 and PolD3/Pol32. In terms of tissue distribution, expressed in ovaries (at the protein level). Expressed in ovaries.

The protein localises to the nucleus. It localises to the nucleoplasm. In terms of biological role, accessory component of the DNA polymerase delta complex and possibly the DNA polymerase zeta complex. As a component of the delta complex, participates in high fidelity genome replication, including lagging strand synthesis, DNA recombination and repair. Required to recruit the DNA polymerase delta complex to the nucleus of rapidly dividing embryonic cells, and as a consequence is essential for genome replication during the earliest cell cycles. Increases the efficiency and processivity of DNA synthesis of the DNA polymerases during mitotic DNA replication and repair. During development this function is essential for preventing replication stress that results in the formation of chromosomal fragile sites (CFS) such as chromosomal breaks. Ensures genomic stability by promoting several types of DNA repair mechanisms including repairing broken dicentric chromosomes through homolog-dependent break-induced replication (BIR). During homologous recombination (HR) repair, required for maintaining the processivity of the delta complex during break-induced replication; a form of HR that requires extensive DNA synthesis such as the repair of large gaps. Able to suppress position effect variegation and may therefore have a role in the induction of chromatin state changes that likely include its activities in DNA replication and repair. The chain is DNA polymerase delta subunit 3 from Drosophila melanogaster (Fruit fly).